A 137-amino-acid chain; its full sequence is Large ribosomal subunit protein uL16 (137 aa).

This sequence belongs to the universal ribosomal protein uL16 family. Part of the 50S ribosomal subunit.

Binds 23S rRNA and is also seen to make contacts with the A and possibly P site tRNAs. The sequence is that of Large ribosomal subunit protein uL16 from Leuconostoc citreum (strain KM20).